A 160-amino-acid polypeptide reads, in one-letter code: Phosphopantetheine adenylyltransferase (160 aa).

T11 serves as a coordination point for substrate. ATP-binding positions include 11-12 (TF) and H19. Substrate is bound by residues K43, T75, and R89. ATP is bound by residues 90–92 (GLR), E100, and 125–131 (YSFLSSS).

It belongs to the bacterial CoaD family. As to quaternary structure, homohexamer. Mg(2+) serves as cofactor.

The protein resides in the cytoplasm. It carries out the reaction (R)-4'-phosphopantetheine + ATP + H(+) = 3'-dephospho-CoA + diphosphate. It participates in cofactor biosynthesis; coenzyme A biosynthesis; CoA from (R)-pantothenate: step 4/5. Functionally, reversibly transfers an adenylyl group from ATP to 4'-phosphopantetheine, yielding dephospho-CoA (dPCoA) and pyrophosphate. The sequence is that of Phosphopantetheine adenylyltransferase from Listeria monocytogenes serovar 1/2a (strain ATCC BAA-679 / EGD-e).